A 288-amino-acid chain; its full sequence is Nucleotide-binding protein Pcar_1935 (288 aa).

Residue 11–18 (GLSGSGKT) participates in ATP binding. Position 62–65 (62–65 (DVRN)) interacts with GTP.

This sequence belongs to the RapZ-like family.

In terms of biological role, displays ATPase and GTPase activities. This chain is Nucleotide-binding protein Pcar_1935, found in Syntrophotalea carbinolica (strain DSM 2380 / NBRC 103641 / GraBd1) (Pelobacter carbinolicus).